The chain runs to 469 residues: Phenylalanine--tRNA ligase alpha subunit (469 aa).

L-phenylalanine-binding positions include Thr309, 348 to 350 (QLD), and Phe388. Glu390 provides a ligand contact to Mg(2+).

This sequence belongs to the class-II aminoacyl-tRNA synthetase family. Phe-tRNA synthetase alpha subunit type 2 subfamily. In terms of assembly, tetramer of two alpha and two beta subunits. Mg(2+) serves as cofactor.

Its subcellular location is the cytoplasm. The catalysed reaction is tRNA(Phe) + L-phenylalanine + ATP = L-phenylalanyl-tRNA(Phe) + AMP + diphosphate + H(+). In Sulfurisphaera tokodaii (strain DSM 16993 / JCM 10545 / NBRC 100140 / 7) (Sulfolobus tokodaii), this protein is Phenylalanine--tRNA ligase alpha subunit.